Here is a 188-residue protein sequence, read N- to C-terminus: Threonylcarbamoyl-AMP synthase (188 aa).

The YrdC-like domain maps to 3–188; that stretch reads QLHPSEIKDL…RSGKILRNGQ (186 aa).

The protein belongs to the SUA5 family. TsaC subfamily.

It localises to the cytoplasm. It catalyses the reaction L-threonine + hydrogencarbonate + ATP = L-threonylcarbamoyladenylate + diphosphate + H2O. Required for the formation of a threonylcarbamoyl group on adenosine at position 37 (t(6)A37) in tRNAs that read codons beginning with adenine. Catalyzes the conversion of L-threonine, HCO(3)(-)/CO(2) and ATP to give threonylcarbamoyl-AMP (TC-AMP) as the acyladenylate intermediate, with the release of diphosphate. The polypeptide is Threonylcarbamoyl-AMP synthase (Shewanella sp. (strain ANA-3)).